A 914-amino-acid polypeptide reads, in one-letter code: Translation initiation factor IF-2 (914 aa).

Disordered regions lie at residues 246 to 271 and 293 to 313; these read EDGEAAKKKAAKPDGGEDVGVKKKKG and SGMDDSGLSGSRQKFRKQRRM. Positions 249 to 266 are enriched in basic and acidic residues; it reads EAAKKKAAKPDGGEDVGV. Positions 411–581 constitute a tr-type G domain; the sequence is TRPPVVTIMG…LAEAEIRELK (171 aa). The interval 420-427 is G1; that stretch reads GHVDHGKT. Position 420–427 (420–427) interacts with GTP; the sequence is GHVDHGKT. The segment at 445–449 is G2; it reads GITQH. The interval 467–470 is G3; that stretch reads DTPG. GTP-binding positions include 467-471 and 521-524; these read DTPGH and NKID. A G4 region spans residues 521–524; it reads NKID. Residues 557 to 559 form a G5 region; it reads SAK.

The protein belongs to the TRAFAC class translation factor GTPase superfamily. Classic translation factor GTPase family. IF-2 subfamily.

It is found in the cytoplasm. In terms of biological role, one of the essential components for the initiation of protein synthesis. Protects formylmethionyl-tRNA from spontaneous hydrolysis and promotes its binding to the 30S ribosomal subunits. Also involved in the hydrolysis of GTP during the formation of the 70S ribosomal complex. The chain is Translation initiation factor IF-2 from Chlorobaculum tepidum (strain ATCC 49652 / DSM 12025 / NBRC 103806 / TLS) (Chlorobium tepidum).